The following is a 367-amino-acid chain: 2-aminoethylphosphonate--pyruvate transaminase (367 aa).

Lys194 is modified (N6-(pyridoxal phosphate)lysine).

It belongs to the class-V pyridoxal-phosphate-dependent aminotransferase family. PhnW subfamily. Homodimer. The cofactor is pyridoxal 5'-phosphate.

It catalyses the reaction (2-aminoethyl)phosphonate + pyruvate = phosphonoacetaldehyde + L-alanine. Functionally, involved in phosphonate degradation. The sequence is that of 2-aminoethylphosphonate--pyruvate transaminase from Salmonella paratyphi A (strain ATCC 9150 / SARB42).